A 42-amino-acid chain; its full sequence is Cytochrome b559 subunit beta (42 aa).

The chain crosses the membrane as a helical span at residues 17–33; sequence WLTIHALAVPTVFFLGA. His-21 contacts heme.

Belongs to the PsbE/PsbF family. In terms of assembly, heterodimer of an alpha subunit and a beta subunit. PSII is composed of 1 copy each of membrane proteins PsbA, PsbB, PsbC, PsbD, PsbE, PsbF, PsbH, PsbI, PsbJ, PsbK, PsbL, PsbM, PsbT, PsbX, PsbY, PsbZ, Psb30/Ycf12, at least 3 peripheral proteins of the oxygen-evolving complex and a large number of cofactors. It forms dimeric complexes. The cofactor is heme b.

Its subcellular location is the plastid. The protein localises to the chloroplast thylakoid membrane. Functionally, this b-type cytochrome is tightly associated with the reaction center of photosystem II (PSII). PSII is a light-driven water:plastoquinone oxidoreductase that uses light energy to abstract electrons from H(2)O, generating O(2) and a proton gradient subsequently used for ATP formation. It consists of a core antenna complex that captures photons, and an electron transfer chain that converts photonic excitation into a charge separation. The sequence is that of Cytochrome b559 subunit beta from Emiliania huxleyi (Coccolithophore).